The following is an 83-amino-acid chain: Exodeoxyribonuclease 7 small subunit (83 aa).

The tract at residues 1-25 (MQDELFETEKAPPKNAKNAPKKSFE) is disordered.

The protein belongs to the XseB family. As to quaternary structure, heterooligomer composed of large and small subunits.

Its subcellular location is the cytoplasm. The enzyme catalyses Exonucleolytic cleavage in either 5'- to 3'- or 3'- to 5'-direction to yield nucleoside 5'-phosphates.. Its function is as follows. Bidirectionally degrades single-stranded DNA into large acid-insoluble oligonucleotides, which are then degraded further into small acid-soluble oligonucleotides. The sequence is that of Exodeoxyribonuclease 7 small subunit from Helicobacter pylori (strain P12).